The chain runs to 318 residues: DNA primase small subunit PriS (318 aa).

Catalysis depends on residues aspartate 95, aspartate 97, and aspartate 224.

The protein belongs to the eukaryotic-type primase small subunit family. Heterodimer of a small subunit (PriS) and a large subunit (PriL). Requires Mg(2+) as cofactor. Mn(2+) serves as cofactor.

Catalytic subunit of DNA primase, an RNA polymerase that catalyzes the synthesis of short RNA molecules used as primers for DNA polymerase during DNA replication. The small subunit contains the primase catalytic core and has DNA synthesis activity on its own. Binding to the large subunit stabilizes and modulates the activity, increasing the rate of DNA synthesis while decreasing the length of the DNA fragments, and conferring RNA synthesis capability. The DNA polymerase activity may enable DNA primase to also catalyze primer extension after primer synthesis. May also play a role in DNA repair. This chain is DNA primase small subunit PriS, found in Sulfurisphaera tokodaii (strain DSM 16993 / JCM 10545 / NBRC 100140 / 7) (Sulfolobus tokodaii).